The chain runs to 510 residues: Anaerobic nitric oxide reductase transcription regulator NorR (510 aa).

The Sigma-54 factor interaction domain occupies 188–417; sequence IIGNSQGMRT…LEHVIKRAAV (230 aa). Residues 216–223 and 279–288 each bind ATP; these read GETGVGKE and ADGGTLFLDE. The H-T-H motif DNA-binding region spans 486–505; that stretch reads WAATARQLELDSGNLHRLAK.

It participates in nitrogen metabolism; nitric oxide reduction. Functionally, required for the expression of anaerobic nitric oxide (NO) reductase, acts as a transcriptional activator for at least the norVW operon. Activation also requires sigma-54. This chain is Anaerobic nitric oxide reductase transcription regulator NorR, found in Vibrio vulnificus (strain CMCP6).